Reading from the N-terminus, the 550-residue chain is Zinc finger protein 426 (550 aa).

In terms of domain architecture, KRAB spans 39–110; the sequence is VSFEDVIVDF…KIVFPEWKLQ (72 aa). 11 C2H2-type zinc fingers span residues 219 to 241, 274 to 296, 302 to 324, 330 to 352, 358 to 380, 386 to 408, 414 to 436, 442 to 464, 470 to 492, 498 to 522, and 528 to 550; these read FECS…QRTH, HRCK…MRTH, YECK…GRTH, YVCS…VRSH, YGCK…IRTH, FVCV…LKLH, CECK…MRTH, YTCK…MRIH, YECK…ERTH, YECK…SHTH, and YKCQ…ERIH.

It localises to the nucleus. Its function is as follows. May be involved in transcriptional regulation. This Mus musculus (Mouse) protein is Zinc finger protein 426 (Znf426).